The chain runs to 74 residues: Conotoxin Vt11.7 (74 aa).

Positions 1-26 (MMFRLTSVGCFLLVIVLLNVAVLTNA) are cleaved as a signal peptide. Cystine bridges form between Cys-28–Cys-42, Cys-35–Cys-47, Cys-41–Cys-51, and Cys-46–Cys-55. Residues 62–74 (AHGHGLLRFWGQR) constitute a propeptide that is removed on maturation.

Belongs to the conotoxin I2 superfamily. In terms of tissue distribution, expressed by the venom duct.

The protein localises to the secreted. In Conus planorbis (Planorbis cone), this protein is Conotoxin Vt11.7.